A 937-amino-acid polypeptide reads, in one-letter code: MSSRPELKVDDEHGFIRFYKSLPQLGEEAIRIFDRGDWYTAHGDDATFIARTVYKTTSVIRQLGRSDHTGLPSVTMTVTVFRQFLREALFKLGKRIEIWASPSGRMNWKVVKQASPGNLQDVEDELGGQFEGAPVILAVKISAKASEARTVGVCFADASVRELGVSEFLDNDLYSNFEALLIQLGVKECIVTQDKGEKEKDPELAKLRQIIDNCGVAIAERSAGEFGTKDIEQDLSRLLKDERAASLLPQTDLKLAMGSASALIKYLGILHDPSNFGQYQLYQHDLAQFMKLDAAALKALNLMPGARDGAKNMSLYGLLNHCKTPVGSRLLSQWLKQPLMNAEEIEKRQQLVEAFANDTELRQSMQEEHLRSIPDLYRLSKRFQRGKATLEDVVRAYQVVIRLPGFIGTLEGVMDEAYRDPLDEVYTNKLRELSDSLVKLQEMVETTVDLDALDNHEFIIKPEFDDSLRIIRKKLDRLRTDMDNEFAEAAEDLGQEREKKIFLENHKVHGWCMRLTRTEAGCIRNNSRYLECSTQKNGVYFTTKTLQALRREFDQLSQNYNRTQSSLVNEVVGVAASYCPVLERLAAVLAHLDVIVSFAHCSVHAPISYVRPKIHPRGTGRTVLTEARHPCMEVQDDVTFITNDVTLTREDSSFLIITGPNMGGKSTYIRQIGVIALMAQIGCFVPCSSAELTIFDSILARVGASDSQLKGVSTFMAEMLETANILKSATAESLIIIDELGRGTSTYDGFGLAWAISEHIVKEIGCFALFATHFHELTALADQYPNVKNLHVTAHISGTDTDTDVITDEDEKAKKKREVTLLYKVEPGICDQSFGIHVAELVRFPDKVVRMAKRKADELEDFTSKHEEENGGGLGVQYSKQDVEEGSALLKDVLVKWKDEVKSGRMSKEEMVARLKELVQKDERLLGNPFFKSVQAL.

An ATP-binding site is contributed by 659 to 666; it reads GPNMGGKS.

Belongs to the DNA mismatch repair MutS family. In terms of assembly, heterodimer of msh2 and msh6.

The protein resides in the nucleus. In terms of biological role, involved in post-replicative DNA-mismatch repair. Binds to mismatch-containing DNA. The protein is DNA mismatch repair protein msh-2 (msh-2) of Neurospora crassa (strain ATCC 24698 / 74-OR23-1A / CBS 708.71 / DSM 1257 / FGSC 987).